We begin with the raw amino-acid sequence, 427 residues long: Forkhead box protein A1-B (427 aa).

A DNA-binding region (fork-head) is located at residues 157-251 (KPPYSYISLI…ENGCYLRRQK (95 aa)). Residues 256–272 (EKTQGGKGNQDGRKDHS) show a composition bias toward basic and acidic residues. The disordered stretch occupies residues 256 to 336 (EKTQGGKGNQ…HQNHSTHSLA (81 aa)). Residues 285–302 (SSQMDSSSSMSNPSSSPQ) are compositionally biased toward low complexity. The segment covering 323 to 334 (PLSSHQNHSTHS) has biased composition (polar residues).

As to expression, present in the vegetal pole and marginal zone but not the animal pole of gastrulae and in equal levels in the dorsal and ventral halves of both gastrulae and neurulae. At neurula stage, expressed in the notochord. During tailbud stages, expressed in the foregut, brain, hypocord, neural floor plate and in two lines of cells just dorsal and ventral to the notochord. Expressed in the adult liver.

The protein resides in the nucleus. Probable transcription factor. The sequence is that of Forkhead box protein A1-B (foxa1-b) from Xenopus laevis (African clawed frog).